A 229-amino-acid chain; its full sequence is Leucyl/phenylalanyl-tRNA--protein transferase (229 aa).

The protein belongs to the L/F-transferase family.

It localises to the cytoplasm. The enzyme catalyses N-terminal L-lysyl-[protein] + L-leucyl-tRNA(Leu) = N-terminal L-leucyl-L-lysyl-[protein] + tRNA(Leu) + H(+). It carries out the reaction N-terminal L-arginyl-[protein] + L-leucyl-tRNA(Leu) = N-terminal L-leucyl-L-arginyl-[protein] + tRNA(Leu) + H(+). It catalyses the reaction L-phenylalanyl-tRNA(Phe) + an N-terminal L-alpha-aminoacyl-[protein] = an N-terminal L-phenylalanyl-L-alpha-aminoacyl-[protein] + tRNA(Phe). In terms of biological role, functions in the N-end rule pathway of protein degradation where it conjugates Leu, Phe and, less efficiently, Met from aminoacyl-tRNAs to the N-termini of proteins containing an N-terminal arginine or lysine. The protein is Leucyl/phenylalanyl-tRNA--protein transferase of Pseudomonas syringae pv. syringae (strain B728a).